The sequence spans 739 residues: Nucleoprotein (739 aa).

Positions V334–L363 form a coiled coil. 2 disordered regions span residues R414–D475 and D493–Q641. The segment covering S531–Q546 has biased composition (polar residues). The span at T570–P579 shows a compositional bias: acidic residues. Residues A614–S624 show a composition bias toward basic and acidic residues. Over residues N625–N634 the composition is skewed to polar residues.

This sequence belongs to the filoviruses nucleoprotein family. Homooligomer. Homomultimerizes to form the nucleocapsid. Binds to viral genomic RNA. Interacts with VP35 and VP30 to form the nucleocapsid. Interacts with host PPP2R5C; this interaction leads to VP30 dephosphorylation and viral transcription. Interacts with VP24; this interaction facilitates nucleocapsid assembly and genome packaging. Interacts with matrix protein VP40; this interaction allows recruitment of the nucleocapsid into progeny virions. Interacts with host STAU1. Interacts with host NXF1 (via RNA-binding domain); this interaction recruits NXF1 to the inclusion bodies were viral replication takes place, probably to export viral mRNA-NXF1 complexes from these sites. Interacts with host CCDC92; this interaction sequesters NP in the host cytoplasm. Interacts with host TRIM14. Post-translationally, phosphorylated and O-glycosylated by host. Acetylated by host EP300 in vitro.

The protein localises to the virion. Its subcellular location is the host cytoplasm. Functionally, oligomerizes into helical capsid to encapsidate the viral genome, protecting it from nucleases and the cellular innate immune response. VP35 binds to and stabilizes monomeric NP, keeping it soluble. Upon virus replication, NP is recruited to bind cooperatively viral genomic RNA and VP35 is released. The encapsidated genomic RNA is termed the nucleocapsid and serves as template for transcription and replication. The nucleocapsid is helical with a pitch of 10.81 NP per turn and a diameter of about 22nm. Each NP binds to six nucleotides of viral genomic RNA, three being exposed to the solvant and three hidden into the nucleocapsid. Also recruits host PPP2R5C phosphatase to dephosphorylate VP30 and thereby promote viral transcription. Upon virion assembly and budding, NP binds to VP24 and possibly host STAU1. The sequence is that of Nucleoprotein (NP) from Reston ebolavirus (strain Reston-89) (REBOV).